We begin with the raw amino-acid sequence, 850 residues long: MIGKMLTKVFGSKNDRVLKQIRPLVTRINDLESTIKPLGDAALVAKTVEFKERIAKGESLKDLLPESFAVMREAASRVLGERHYDVQLVGGIILHKGRIAEMKTGEGKTLTSTLPVYLNGLSGKGVHVVTVNDYLAARDAEWMGQVYDFLGMSWDKIIHGMDDVERRAAYAADITYGTNNEFGFDYLRDNMKFELDDFCQRGFNFAIVDEVDSILIDEARTPLIISGPAEMSTELYDNINSIMYNFKVEEHYTVDEKARTVSLTDDGIGLGEELLDLENLCDPSSIEQLHHLNQALKAHVLFQRDVDYIVNDGQVVIVDEFTGRTMEGRRYSDGLHQALEAKENVKVEQENQTLAAITFQNYFRMYDKLAGMTGTADTEAAEFKKIYDLDVVLMPTNQPMVRDDYADVIFKNEDAKYRAVVREIAEMHEKGRPVLVGTISIDVSEKIADMLTKAKVPHEVLNAKQHAREAEIITAAGQVGRVTIATNMAGRGTDIKLGEGVRELGGLHIVATSRHESRRIDNQLRGRAGRQGDPGSSRFYLSLEDDLLRIFGSGRVSGIMDKLGMEEDEPIEHGMISRAIENAQRKVEGHNFDIRKHLLEYDDVMNKQREIVYQQRYEVLAGADVSAEIQEMVNDIVRNLASEFSDERLDSLDWDWAGCLERLQEAFSVQPEWSEETRTDIKFEELRDLIAGVVAQKYREQEEENGADTQRQLEKILLLQVVDGLWKDHLLSMDYLKEGIGLRGYGQKNPLNEYKREAFQLFGHLMETVKSQVVSSLMRVRVVHENDVDRMEEERRRRHEEEMQRIQALVPAGNADEEHQQPAHVDKIGRNTPCPCGSGKKYKKCCGKLS.

ATP is bound by residues Gln-87, 105-109 (GEGKT), and Asp-494. Residues Cys-834, Cys-836, Cys-845, and Cys-846 each coordinate Zn(2+).

The protein belongs to the SecA family. In terms of assembly, monomer and homodimer. Part of the essential Sec protein translocation apparatus which comprises SecA, SecYEG and auxiliary proteins SecDF-YajC and YidC. Requires Zn(2+) as cofactor.

Its subcellular location is the cell inner membrane. The protein resides in the cytoplasm. It carries out the reaction ATP + H2O + cellular proteinSide 1 = ADP + phosphate + cellular proteinSide 2.. Part of the Sec protein translocase complex. Interacts with the SecYEG preprotein conducting channel. Has a central role in coupling the hydrolysis of ATP to the transfer of proteins into and across the cell membrane, serving as an ATP-driven molecular motor driving the stepwise translocation of polypeptide chains across the membrane. In Desulfotalea psychrophila (strain LSv54 / DSM 12343), this protein is Protein translocase subunit SecA.